Consider the following 28-residue polypeptide: Cysteine-rich venom protein asurin-2 (28 aa).

The segment covering 1–15 has biased composition (basic and acidic residues); it reads SNKKDYRKEIVDKHN. The tract at residues 1 to 28 is disordered; that stretch reads SNKKDYRKEIVDKHNALSRSVKPTASNM. A compositionally biased stretch (polar residues) spans 17 to 28; sequence LSRSVKPTASNM.

Belongs to the CRISP family. Post-translationally, contains 8 disulfide bonds. As to expression, expressed by the venom gland.

Its subcellular location is the secreted. Its function is as follows. Blocks contraction of smooth muscle elicited by high potassium-induced depolarization, but does not block caffeine-stimulated contraction. May target voltage-gated calcium channels on smooth muscle. This is Cysteine-rich venom protein asurin-2 from Austrelaps superbus (Lowland copperhead snake).